A 681-amino-acid chain; its full sequence is Epithelial splicing regulatory protein 1 (681 aa).

3 RRM domains span residues 225 to 302, 326 to 406, and 445 to 525; these read TVVR…KATG, VIVR…RSTA, and DCIR…QCSA. S543 carries the phosphoserine modification. R582 is modified (omega-N-methylarginine).

This sequence belongs to the ESRP family. In terms of tissue distribution, epithelial cell-specific.

The protein localises to the nucleus. In terms of biological role, mRNA splicing factor that regulates the formation of epithelial cell-specific isoforms. Specifically regulates the expression of FGFR2-IIIb, an epithelial cell-specific isoform of FGFR2. Also regulates the splicing of CD44, CTNND1, ENAH, 3 transcripts that undergo changes in splicing during the epithelial-to-mesenchymal transition (EMT). Acts by directly binding specific sequences in mRNAs. Binds the GU-rich sequence motifs in the ISE/ISS-3, a cis-element regulatory region present in the mRNA of FGFR2. Regulates splicing and expression of genes involved in inner ear development, auditory hair cell differentiation, and cell fate specification in the cochlear epithelium. This chain is Epithelial splicing regulatory protein 1 (ESRP1), found in Homo sapiens (Human).